Consider the following 100-residue polypeptide: Small ribosomal subunit protein uS14c (100 aa).

This sequence belongs to the universal ribosomal protein uS14 family. As to quaternary structure, part of the 30S ribosomal subunit.

The protein localises to the plastid. It localises to the chloroplast. In terms of biological role, binds 16S rRNA, required for the assembly of 30S particles. The chain is Small ribosomal subunit protein uS14c from Bigelowiella natans (Pedinomonas minutissima).